We begin with the raw amino-acid sequence, 215 residues long: N-(5'-phosphoribosyl)anthranilate isomerase (215 aa).

It belongs to the TrpF family.

It catalyses the reaction N-(5-phospho-beta-D-ribosyl)anthranilate = 1-(2-carboxyphenylamino)-1-deoxy-D-ribulose 5-phosphate. Its pathway is amino-acid biosynthesis; L-tryptophan biosynthesis; L-tryptophan from chorismate: step 3/5. This chain is N-(5'-phosphoribosyl)anthranilate isomerase, found in Rhizobium meliloti (strain 1021) (Ensifer meliloti).